Consider the following 122-residue polypeptide: NADH-quinone oxidoreductase subunit A (122 aa).

A run of 3 helical transmembrane segments spans residues Met-10 to Gly-30, Ile-66 to Val-86, and Leu-91 to Ala-111.

This sequence belongs to the complex I subunit 3 family. As to quaternary structure, NDH-1 is composed of 14 different subunits. Subunits NuoA, H, J, K, L, M, N constitute the membrane sector of the complex.

The protein localises to the cell membrane. It carries out the reaction a quinone + NADH + 5 H(+)(in) = a quinol + NAD(+) + 4 H(+)(out). Its function is as follows. NDH-1 shuttles electrons from NADH, via FMN and iron-sulfur (Fe-S) centers, to quinones in the respiratory chain. The immediate electron acceptor for the enzyme in this species is believed to be a menaquinone. Couples the redox reaction to proton translocation (for every two electrons transferred, four hydrogen ions are translocated across the cytoplasmic membrane), and thus conserves the redox energy in a proton gradient. The sequence is that of NADH-quinone oxidoreductase subunit A from Bacillus thuringiensis subsp. konkukian (strain 97-27).